A 323-amino-acid polypeptide reads, in one-letter code: NADH-ubiquinone oxidoreductase chain 1 (323 aa).

8 helical membrane-spanning segments follow: residues 4–24 (LFTV…VAFL), 73–93 (YLFF…WNLM), 106–126 (LLLV…SGWA), 150–170 (LALI…TYIM), 175–195 (FSWF…STLA), 226–246 (LFFI…VVIF), 256–276 (LFPL…FLFL), and 303–323 (IGAL…LPLF).

Belongs to the complex I subunit 1 family.

The protein resides in the mitochondrion inner membrane. The enzyme catalyses a ubiquinone + NADH + 5 H(+)(in) = a ubiquinol + NAD(+) + 4 H(+)(out). Its function is as follows. Core subunit of the mitochondrial membrane respiratory chain NADH dehydrogenase (Complex I) that is believed to belong to the minimal assembly required for catalysis. Complex I functions in the transfer of electrons from NADH to the respiratory chain. The immediate electron acceptor for the enzyme is believed to be ubiquinone. In Paracentrotus lividus (Common sea urchin), this protein is NADH-ubiquinone oxidoreductase chain 1 (ND1).